Reading from the N-terminus, the 271-residue chain is DNA repair protein RecO (271 aa).

It belongs to the RecO family.

Involved in DNA repair and RecF pathway recombination. In Synechococcus sp. (strain CC9311), this protein is DNA repair protein RecO.